Reading from the N-terminus, the 270-residue chain is 3-phenylpropionate-dihydrodiol/cinnamic acid-dihydrodiol dehydrogenase (270 aa).

Position 10 to 34 (10 to 34) interacts with NAD(+); sequence FITGGGSGLGLALVERFIEEGAQVA. A substrate-binding site is contributed by Ser143. Tyr156 acts as the Proton acceptor in catalysis.

Belongs to the short-chain dehydrogenases/reductases (SDR) family.

It catalyses the reaction 3-(cis-5,6-dihydroxycyclohexa-1,3-dien-1-yl)propanoate + NAD(+) = 3-(2,3-dihydroxyphenyl)propanoate + NADH + H(+). The enzyme catalyses (2E)-3-(cis-5,6-dihydroxycyclohexa-1,3-dien-1-yl)prop-2-enoate + NAD(+) = (2E)-3-(2,3-dihydroxyphenyl)prop-2-enoate + NADH + H(+). It functions in the pathway aromatic compound metabolism; 3-phenylpropanoate degradation. In terms of biological role, converts 3-phenylpropionate-dihydrodiol (PP-dihydrodiol) and cinnamic acid-dihydrodiol (CI-dihydrodiol) into 3-(2,3-dihydroxylphenyl)propanoic acid (DHPP) and 2,3-dihydroxicinnamic acid (DHCI), respectively. The protein is 3-phenylpropionate-dihydrodiol/cinnamic acid-dihydrodiol dehydrogenase of Escherichia coli O157:H7.